A 155-amino-acid polypeptide reads, in one-letter code: SsrA-binding protein (155 aa).

This sequence belongs to the SmpB family.

It is found in the cytoplasm. Its function is as follows. Required for rescue of stalled ribosomes mediated by trans-translation. Binds to transfer-messenger RNA (tmRNA), required for stable association of tmRNA with ribosomes. tmRNA and SmpB together mimic tRNA shape, replacing the anticodon stem-loop with SmpB. tmRNA is encoded by the ssrA gene; the 2 termini fold to resemble tRNA(Ala) and it encodes a 'tag peptide', a short internal open reading frame. During trans-translation Ala-aminoacylated tmRNA acts like a tRNA, entering the A-site of stalled ribosomes, displacing the stalled mRNA. The ribosome then switches to translate the ORF on the tmRNA; the nascent peptide is terminated with the 'tag peptide' encoded by the tmRNA and targeted for degradation. The ribosome is freed to recommence translation, which seems to be the essential function of trans-translation. The sequence is that of SsrA-binding protein from Streptococcus pneumoniae (strain P1031).